Consider the following 638-residue polypeptide: Threonine--tRNA ligase (638 aa).

Residues 1–59 enclose the TGS domain; the sequence is MEKIKVKIKGKEYEVEKGTPLGKIFELAGIKDALGGVINGKIIDLQTPVRESGEIKPVY. The interval 243–536 is catalytic; it reads DHRRLGKELE…LLEHYAGLLP (294 aa). Zn(2+) is bound by residues C336, H387, and H513.

Belongs to the class-II aminoacyl-tRNA synthetase family. Homodimer. The cofactor is Zn(2+).

The protein resides in the cytoplasm. It carries out the reaction tRNA(Thr) + L-threonine + ATP = L-threonyl-tRNA(Thr) + AMP + diphosphate + H(+). Functionally, catalyzes the attachment of threonine to tRNA(Thr) in a two-step reaction: L-threonine is first activated by ATP to form Thr-AMP and then transferred to the acceptor end of tRNA(Thr). Also edits incorrectly charged L-seryl-tRNA(Thr). This chain is Threonine--tRNA ligase, found in Aquifex aeolicus (strain VF5).